The primary structure comprises 296 residues: Cleavage and polyadenylation specificity factor subunit 4 (296 aa).

5 C3H1-type zinc fingers span residues 35 to 63 (KSIA…RHIR), 64 to 91 (GDRT…HEYD), 92 to 119 (MTKM…HIDP), 120 to 147 (QSKV…HLRR), and 149 to 171 (LCMD…HPHF). A CCHC-type 1 zinc finger spans residues 189–206 (PTCHYCGELGHKANSCKQ). The segment at 222-254 (HSGGHSGGYSGHSGHIEGADDMQSNHHSQPHGP) is disordered. Residues 266 to 283 (ITCYKCGNKGHYANKCPK) form a CCHC-type 2 zinc finger.

Component of the cleavage and polyadenylation specificity factor (CPSF) complex, composed of at least Clp, Cpsf73, Cpsf100 and Cpsf160. In terms of tissue distribution, during oogenesis, expression is detected in the germarium, in nurse cells, in the oocyte, and in the somatically derived follicular epithelial cells (at protein level). At oogenesis stage 12, nurse cells degenerate and their content is transferred into the oocyte. In larvae, expressed in all organs and disks (at protein level). In the larval salivary gland, expression is initially confined to cells at the anterior end but later expands throughout the entire gland (at protein level).

The protein resides in the nucleus. In terms of biological role, component of the cleavage and polyadenylation specificity factor (CPSF) complex that plays a key role in pre-mRNA 3'-end formation, recognizing the AAUAAA signal sequence and interacting with poly(A) polymerase and other factors to bring about cleavage and poly(A) addition. Has endonuclease activity. Binds RNA polymers with a preference for G- and/or C-rich clusters. Binds single-stranded DNA non-specifically. This Drosophila melanogaster (Fruit fly) protein is Cleavage and polyadenylation specificity factor subunit 4 (Clp).